The primary structure comprises 418 residues: Actin-related protein 3-B (418 aa).

This sequence belongs to the actin family. ARP3 subfamily. Component of the Arp2/3 complex composed of actr2/arp2, actr3/arp3, arpc1 (arpc1a or arpc1b), arpc2, arpc3, arpc4 and arpc5.

It localises to the cytoplasm. The protein resides in the cytoskeleton. Its subcellular location is the cell projection. The protein localises to the nucleus. Functionally, ATP-binding component of the Arp2/3 complex, a multiprotein complex that mediates actin polymerization upon stimulation by nucleation-promoting factor (NPF). The Arp2/3 complex mediates the formation of branched actin networks in the cytoplasm, providing the force for cell motility. Seems to contact the pointed end of the daughter actin filament. In addition to its role in the cytoplasmic cytoskeleton, the Arp2/3 complex also promotes actin polymerization in the nucleus, thereby regulating gene transcription and repair of damaged DNA. The Arp2/3 complex promotes homologous recombination (HR) repair in response to DNA damage by promoting nuclear actin polymerization, leading to drive motility of double-strand breaks (DSBs). In Xenopus laevis (African clawed frog), this protein is Actin-related protein 3-B (actr3-b).